The primary structure comprises 261 residues: Zinc import ATP-binding protein ZnuC (261 aa).

Positions 5–220 (ISLKALSVTF…PSYIALFGSA (216 aa)) constitute an ABC transporter domain. Residue 37–44 (GPNGAGKS) participates in ATP binding. The disordered stretch occupies residues 236 to 261 (HHDLAGQPVSGDATQCNHHHHGHHHD). A compositionally biased stretch (basic residues) spans 252 to 261 (NHHHHGHHHD).

The protein belongs to the ABC transporter superfamily. Zinc importer (TC 3.A.1.15.5) family. As to quaternary structure, the complex is composed of two ATP-binding proteins (ZnuC), two transmembrane proteins (ZnuB) and a solute-binding protein (ZnuA).

It is found in the cell inner membrane. The enzyme catalyses Zn(2+)(out) + ATP(in) + H2O(in) = Zn(2+)(in) + ADP(in) + phosphate(in) + H(+)(in). In terms of biological role, part of the ABC transporter complex ZnuABC involved in zinc import. Responsible for energy coupling to the transport system. The protein is Zinc import ATP-binding protein ZnuC of Vibrio vulnificus (strain CMCP6).